A 570-amino-acid chain; its full sequence is MSEKYPGPLVVEGKLSDAERMKRESNFLRGTIAEDLHDGLTGGFNGDNFLLIRFHGMYQQDDRDIRAERAAQKLEPRHAMMLRCRLPGGIMTPQQWLAIDKFAEENTIYGSIRLTNRQTFQYHGLLKKNVKPAHQMLHSVGLDALATANDMNRNVLCTSNPVESQLHAEAYEWAKKLSEHLLPRTRAYAEIWLDQEKVATTDEEPILGATYLPRKFKTTVVVPPQNDVDLHANDMNFVAIAENGKLVGFNLLVGGGLSIEHGNKKTYARTATEFGYIPLEHTLAVAEAVVTTQRDWGNRTDRKNAKTKYTLERVGPDVFKAEVERRAGVTFEPVRPYEFTGRGDRIGWVKGIDDKWHLTLFIENGRILDFPDKPLKTGLKEIARIHKGDFRLTANQNLIVAGVPEGDKAKIEQIARAHGLMAGVTPQRENSMACVSFPTCPLAMAEAERFLPQFIDKVDGIMAKHGLAEEHIVLRVTGCPNGCGRAMLAELGLVGKAPGRYNLHLGGNRIGTRIPRMYRENITESEILDNIDELVGRWAQEREPGEGFGDFTVRAGIIRPVLDPARDFWE.

Cysteine 434, cysteine 440, cysteine 479, and cysteine 483 together coordinate [4Fe-4S] cluster. Cysteine 483 is a binding site for siroheme.

The protein belongs to the nitrite and sulfite reductase 4Fe-4S domain family. As to quaternary structure, alpha(8)-beta(8). The alpha component is a flavoprotein, the beta component is a hemoprotein. Siroheme is required as a cofactor. The cofactor is [4Fe-4S] cluster.

It catalyses the reaction hydrogen sulfide + 3 NADP(+) + 3 H2O = sulfite + 3 NADPH + 4 H(+). The protein operates within sulfur metabolism; hydrogen sulfide biosynthesis; hydrogen sulfide from sulfite (NADPH route): step 1/1. Its function is as follows. Component of the sulfite reductase complex that catalyzes the 6-electron reduction of sulfite to sulfide. This is one of several activities required for the biosynthesis of L-cysteine from sulfate. This chain is Sulfite reductase [NADPH] hemoprotein beta-component, found in Cronobacter sakazakii (strain ATCC BAA-894) (Enterobacter sakazakii).